Here is a 122-residue protein sequence, read N- to C-terminus: ATP-dependent Clp protease adapter protein ClpS (122 aa).

The protein belongs to the ClpS family. Binds to the N-terminal domain of the chaperone ClpA.

Involved in the modulation of the specificity of the ClpAP-mediated ATP-dependent protein degradation. The protein is ATP-dependent Clp protease adapter protein ClpS of Pseudomonas fluorescens (strain SBW25).